The following is a 247-amino-acid chain: NAD(P)H-quinone oxidoreductase subunit K, chloroplastic (247 aa).

[4Fe-4S] cluster contacts are provided by cysteine 61, cysteine 62, cysteine 126, and cysteine 157.

Belongs to the complex I 20 kDa subunit family. In terms of assembly, NDH is composed of at least 16 different subunits, 5 of which are encoded in the nucleus. It depends on [4Fe-4S] cluster as a cofactor.

Its subcellular location is the plastid. The protein resides in the chloroplast thylakoid membrane. It catalyses the reaction a plastoquinone + NADH + (n+1) H(+)(in) = a plastoquinol + NAD(+) + n H(+)(out). The catalysed reaction is a plastoquinone + NADPH + (n+1) H(+)(in) = a plastoquinol + NADP(+) + n H(+)(out). Functionally, NDH shuttles electrons from NAD(P)H:plastoquinone, via FMN and iron-sulfur (Fe-S) centers, to quinones in the photosynthetic chain and possibly in a chloroplast respiratory chain. The immediate electron acceptor for the enzyme in this species is believed to be plastoquinone. Couples the redox reaction to proton translocation, and thus conserves the redox energy in a proton gradient. The polypeptide is NAD(P)H-quinone oxidoreductase subunit K, chloroplastic (Anthoceros angustus (Hornwort)).